Consider the following 377-residue polypeptide: Mitogen-activated protein kinase HOG1 (377 aa).

The Protein kinase domain maps to 23–305; sequence YTELNPVGMG…AVEGLTHPYM (283 aa). Residues 29–37 and Lys-52 contribute to the ATP site; that span reads VGMGAFGLV. Catalysis depends on Asp-144, which acts as the Proton acceptor. Thr-174 is subject to Phosphothreonine. A TXY motif is present at residues 174–176; the sequence is TGY. Phosphotyrosine is present on Tyr-176. Residues 354-377 are disordered; the sequence is NETEGSEQPDSQVEQNNLDSANGA. Positions 359–377 are enriched in polar residues; it reads SEQPDSQVEQNNLDSANGA.

This sequence belongs to the protein kinase superfamily. Ser/Thr protein kinase family. MAP kinase subfamily. HOG1 sub-subfamily. It depends on Mg(2+) as a cofactor. Dually phosphorylated on Thr-174 and Tyr-176, which activates the enzyme. Phosphorylated in response to oxidative and salt stress.

It is found in the cytoplasm. The protein localises to the nucleus. It catalyses the reaction L-seryl-[protein] + ATP = O-phospho-L-seryl-[protein] + ADP + H(+). The enzyme catalyses L-threonyl-[protein] + ATP = O-phospho-L-threonyl-[protein] + ADP + H(+). Its activity is regulated as follows. Activated by tyrosine and threonine phosphorylation. Proline-directed serine/threonine-protein kinase involved in a signal transduction pathway that is activated by changes in the osmolarity of the extracellular environment. Controls osmotic regulation of transcription of target genes. Regulates stress-induced production and accumulation of glycerol and D-arabitol. HOG1 is also involved in virulence, morphogenesis and oxidative stress response especially through its role in chlamydospore formation, an oxygen-dependent morphogenetic program. This is Mitogen-activated protein kinase HOG1 (HOG1) from Candida albicans (strain SC5314 / ATCC MYA-2876) (Yeast).